A 166-amino-acid chain; its full sequence is NAD(P)H-quinone oxidoreductase subunit I, chloroplastic (166 aa).

4Fe-4S ferredoxin-type domains are found at residues 55-84 and 95-124; these read GRIH…VDWK and LNYS…MTEE. Cys-64, Cys-67, Cys-70, Cys-74, Cys-104, Cys-107, Cys-110, and Cys-114 together coordinate [4Fe-4S] cluster.

Belongs to the complex I 23 kDa subunit family. In terms of assembly, NDH is composed of at least 16 different subunits, 5 of which are encoded in the nucleus. Requires [4Fe-4S] cluster as cofactor.

It localises to the plastid. It is found in the chloroplast thylakoid membrane. It catalyses the reaction a plastoquinone + NADH + (n+1) H(+)(in) = a plastoquinol + NAD(+) + n H(+)(out). It carries out the reaction a plastoquinone + NADPH + (n+1) H(+)(in) = a plastoquinol + NADP(+) + n H(+)(out). Its function is as follows. NDH shuttles electrons from NAD(P)H:plastoquinone, via FMN and iron-sulfur (Fe-S) centers, to quinones in the photosynthetic chain and possibly in a chloroplast respiratory chain. The immediate electron acceptor for the enzyme in this species is believed to be plastoquinone. Couples the redox reaction to proton translocation, and thus conserves the redox energy in a proton gradient. The sequence is that of NAD(P)H-quinone oxidoreductase subunit I, chloroplastic from Guardiola tulocarpus.